The chain runs to 329 residues: 3-isopropylmalate dehydrogenase (329 aa).

Substrate is bound by residues arginine 83, arginine 93, arginine 114, and aspartate 200. Residues aspartate 200, aspartate 224, and aspartate 228 each contribute to the Mg(2+) site. 257–269 (GSAPQIAGKNIAN) contributes to the NAD(+) binding site.

This sequence belongs to the isocitrate and isopropylmalate dehydrogenases family. As to quaternary structure, homotetramer. It depends on Mg(2+) as a cofactor. Requires Mn(2+) as cofactor.

It localises to the cytoplasm. It catalyses the reaction (2R,3S)-3-isopropylmalate + NAD(+) = 4-methyl-2-oxopentanoate + CO2 + NADH. It participates in amino-acid biosynthesis; L-leucine biosynthesis; L-leucine from 3-methyl-2-oxobutanoate: step 3/4. Its function is as follows. Catalyzes the oxidation of 3-carboxy-2-hydroxy-4-methylpentanoate (3-isopropylmalate) to 3-carboxy-4-methyl-2-oxopentanoate. The product decarboxylates to 4-methyl-2 oxopentanoate. The protein is 3-isopropylmalate dehydrogenase (leuB) of Methanothermobacter thermautotrophicus (strain ATCC 29096 / DSM 1053 / JCM 10044 / NBRC 100330 / Delta H) (Methanobacterium thermoautotrophicum).